The sequence spans 257 residues: NAD-capped RNA hydrolase NudC (257 aa).

Residues Lys-25 and Arg-69 each contribute to the substrate site. The Zn(2+) site is built by Cys-98 and Cys-101. Glu-111 lines the substrate pocket. Zn(2+)-binding residues include Cys-116 and Cys-119. Tyr-124 contributes to the substrate binding site. The Nudix hydrolase domain maps to 125–248 (PQIAPCIIVA…TVARRLIEDT (124 aa)). The a divalent metal cation site is built by Ala-158, Glu-174, and Glu-178. The Nudix box motif lies at 159–180 (GFVEVGETLEQAVAREVMEESG). Position 192–199 (192–199 (QPWPFPQS)) interacts with substrate. Residue Glu-219 coordinates a divalent metal cation. Ala-241 is a binding site for substrate.

This sequence belongs to the Nudix hydrolase family. NudC subfamily. As to quaternary structure, homodimer. Mg(2+) serves as cofactor. It depends on Mn(2+) as a cofactor. The cofactor is Zn(2+).

It carries out the reaction a 5'-end NAD(+)-phospho-ribonucleoside in mRNA + H2O = a 5'-end phospho-adenosine-phospho-ribonucleoside in mRNA + beta-nicotinamide D-ribonucleotide + 2 H(+). The enzyme catalyses NAD(+) + H2O = beta-nicotinamide D-ribonucleotide + AMP + 2 H(+). The catalysed reaction is NADH + H2O = reduced beta-nicotinamide D-ribonucleotide + AMP + 2 H(+). Functionally, mRNA decapping enzyme that specifically removes the nicotinamide adenine dinucleotide (NAD) cap from a subset of mRNAs by hydrolyzing the diphosphate linkage to produce nicotinamide mononucleotide (NMN) and 5' monophosphate mRNA. The NAD-cap is present at the 5'-end of some mRNAs and stabilizes RNA against 5'-processing. Has preference for mRNAs with a 5'-end purine. Catalyzes the hydrolysis of a broad range of dinucleotide pyrophosphates. In Shigella flexneri serotype 5b (strain 8401), this protein is NAD-capped RNA hydrolase NudC.